The primary structure comprises 189 residues: GTP cyclohydrolase 1 (189 aa).

Positions 80, 83, and 152 each coordinate Zn(2+).

This sequence belongs to the GTP cyclohydrolase I family. As to quaternary structure, toroid-shaped homodecamer, composed of two pentamers of five dimers.

The enzyme catalyses GTP + H2O = 7,8-dihydroneopterin 3'-triphosphate + formate + H(+). It functions in the pathway cofactor biosynthesis; 7,8-dihydroneopterin triphosphate biosynthesis; 7,8-dihydroneopterin triphosphate from GTP: step 1/1. The polypeptide is GTP cyclohydrolase 1 (Latilactobacillus sakei subsp. sakei (strain 23K) (Lactobacillus sakei subsp. sakei)).